The sequence spans 816 residues: Leucine--tRNA ligase (816 aa).

Positions S40 to H51 match the 'HIGH' region motif. The 'KMSKS' region motif lies at K576 to S580. Position 579 (K579) interacts with ATP.

This sequence belongs to the class-I aminoacyl-tRNA synthetase family.

The protein resides in the cytoplasm. The enzyme catalyses tRNA(Leu) + L-leucine + ATP = L-leucyl-tRNA(Leu) + AMP + diphosphate. In Clostridium perfringens (strain SM101 / Type A), this protein is Leucine--tRNA ligase.